The chain runs to 429 residues: Adenylosuccinate synthetase (429 aa).

Residues 12 to 18 and 40 to 42 each bind GTP; these read GDEGKGK and GHT. Catalysis depends on Asp-13, which acts as the Proton acceptor. Positions 13 and 40 each coordinate Mg(2+). IMP is bound by residues 13–16, 38–41, Thr-129, Arg-143, Gln-223, Thr-238, and Arg-302; these read DEGK and NAGH. His-41 functions as the Proton donor in the catalytic mechanism. Substrate is bound at residue 298–304; it reads TVTGRPR. GTP is bound by residues Arg-304, 330 to 332, and 412 to 414; these read KLD and STS.

Belongs to the adenylosuccinate synthetase family. As to quaternary structure, homodimer. The cofactor is Mg(2+).

It is found in the cytoplasm. The enzyme catalyses IMP + L-aspartate + GTP = N(6)-(1,2-dicarboxyethyl)-AMP + GDP + phosphate + 2 H(+). It functions in the pathway purine metabolism; AMP biosynthesis via de novo pathway; AMP from IMP: step 1/2. Plays an important role in the de novo pathway of purine nucleotide biosynthesis. Catalyzes the first committed step in the biosynthesis of AMP from IMP. The sequence is that of Adenylosuccinate synthetase from Rhodospirillum rubrum (strain ATCC 11170 / ATH 1.1.1 / DSM 467 / LMG 4362 / NCIMB 8255 / S1).